A 230-amino-acid chain; its full sequence is Ribose-5-phosphate isomerase A (230 aa).

Substrate contacts are provided by residues 31 to 34 (TGST), 87 to 90 (DGAD), and 100 to 103 (KGGG). E109 acts as the Proton acceptor in catalysis. K127 contacts substrate.

Belongs to the ribose 5-phosphate isomerase family. Homodimer.

The enzyme catalyses aldehydo-D-ribose 5-phosphate = D-ribulose 5-phosphate. It functions in the pathway carbohydrate degradation; pentose phosphate pathway; D-ribose 5-phosphate from D-ribulose 5-phosphate (non-oxidative stage): step 1/1. Catalyzes the reversible conversion of ribose-5-phosphate to ribulose 5-phosphate. This chain is Ribose-5-phosphate isomerase A, found in Lactobacillus delbrueckii subsp. bulgaricus (strain ATCC 11842 / DSM 20081 / BCRC 10696 / JCM 1002 / NBRC 13953 / NCIMB 11778 / NCTC 12712 / WDCM 00102 / Lb 14).